The sequence spans 199 residues: Peptidyl-prolyl cis-trans isomerase CYP22 (199 aa).

The region spanning 35 to 198 is the PPIase cyclophilin-type domain; that stretch reads FFDVSIGGIP…LAVVITECGE (164 aa).

This sequence belongs to the cyclophilin-type PPIase family. As to expression, ubiquitous.

The catalysed reaction is [protein]-peptidylproline (omega=180) = [protein]-peptidylproline (omega=0). Its function is as follows. PPIases accelerate the folding of proteins. It catalyzes the cis-trans isomerization of proline imidic peptide bonds in oligopeptides. This is Peptidyl-prolyl cis-trans isomerase CYP22 (CYP22) from Arabidopsis thaliana (Mouse-ear cress).